The sequence spans 348 residues: Ferredoxin--NADP reductase 1 (348 aa).

FAD-binding residues include D33, K41, Y45, V85, L120, D287, and S328.

This sequence belongs to the ferredoxin--NADP reductase type 2 family. In terms of assembly, homodimer. FAD is required as a cofactor.

The enzyme catalyses 2 reduced [2Fe-2S]-[ferredoxin] + NADP(+) + H(+) = 2 oxidized [2Fe-2S]-[ferredoxin] + NADPH. This chain is Ferredoxin--NADP reductase 1, found in Oceanobacillus iheyensis (strain DSM 14371 / CIP 107618 / JCM 11309 / KCTC 3954 / HTE831).